The chain runs to 432 residues: Putative D-alanyl-D-alanine carboxypeptidase (432 aa).

Residues 7–25 (ATVLLTFSLSAFAVEYPVL) form a helical; Signal-anchor membrane-spanning segment.

Belongs to the peptidase S12 family. YfeW subfamily.

It localises to the cell inner membrane. The catalysed reaction is Preferential cleavage: (Ac)2-L-Lys-D-Ala-|-D-Ala. Also transpeptidation of peptidyl-alanyl moieties that are N-acyl substituents of D-alanine.. This Salmonella typhimurium (strain LT2 / SGSC1412 / ATCC 700720) protein is Putative D-alanyl-D-alanine carboxypeptidase.